A 1358-amino-acid chain; its full sequence is Nonribosomal peptide synthetase rstn8 (1358 aa).

The segment at 1-23 is disordered; sequence MSHSSHYSPVDSGMVPSSSSTED. The interval 261–659 is adenylation; it reads YRELDRLSSR…LGEVEYRLHQ (399 aa). The region spanning 795 to 872 is the Carrier domain; the sequence is ETVSPAESTL…DQASLVRPLV (78 aa). An O-(pantetheine 4'-phosphoryl)serine modification is found at Ser-832. Residues 909–1322 form a condensation region; that stretch reads EDIYPCTPLQ…DDYSQALHEL (414 aa).

The protein belongs to the NRP synthetase family. Pantetheine 4'-phosphate is required as a cofactor.

It catalyses the reaction restrictinol + glycine + H(+) = restricticin + H2O. Its pathway is antifungal biosynthesis. Functionally, nonribosomal peptide synthetase; part of the gene cluster that mediates the biosynthesis of the tetrahydropyranyl antifungal agent restricticin that acts as an inhibitor of CYP51 and blocks the ergosterol biosynthesis. Within the pathway, rstn8 catalyzes the C3 esterification of restrictinol with glycine to yield restricticin. Rstn8 represents an example of the emerging class of single-module NRPS-like enzymes that perform esterification reactions. Rstn8 displays strict substrate specificity toward glycine as no other natural amino acid is accepted. Rstn8 does not recognize desmethylrestrictinol as a substrate, demonstrating that rstn1-catalyzed methylation, possibly protecting the C4-OH, must precede the final esterification step. The highly reducing polyketide synthase rstn3, the short chain dehydrogenase rstn4, the cyclase rstn5, the FAD-dependent monooxygenase rstn6 and the enoylreductase rstn7 are required to generate the first stable intermediate desmethylrestrictinol. Rstn3 with rstn7 biosynthesize the first polyketide chain intermediate that is reduced by rstn4, followed by epoxidation by rstn6 before 6-endo cyclization via epoxide opening by rstn5 leads to desmethylrestrictinol. The methyltransferase rstn1 then catalyzes the C4 O-methylation of desmethylrestrictinol to produce restrictinol, and the nonribosomal peptide synthetase rstn8 catalyzes the C3 esterification of restrictinol with glycine that leads to restricticin. In Aspergillus nomiae NRRL (strain ATCC 15546 / NRRL 13137 / CBS 260.88 / M93), this protein is Nonribosomal peptide synthetase rstn8.